We begin with the raw amino-acid sequence, 436 residues long: YRLTYYTPDYQVAETDILAAFRMTPQPGVPAEECGAAVAAESSTGTWTTVWTDGLTQLDKYKGRCYDLEPVPGESNQYIAYVAYPIDLFEEGSVTNLLTSIVGNVFGFKALRSLRLEDLRIPPAYAKTFWGPPHGIQVERDKLNKYGRPLLGCTIKPKLGLSAKYYGRAVYECLRGGLDFTKDDENVNSQAFMRWRDRFLFCAEAIYKAQSETGEVKGHYLNATGGTVEEMYKRANYAAQIGVPIIMHDYITGGFTANTSLSMFCRDNGLLLHIHRAMHAVIDRQRNHGIHFRVLAKTLRMSGGDHLHSGTVVGKLEGEREVTLGFVDLMRDPYIEKDRSRGIYFTQDWCGMGGVMPVASGGIHVWHMPALTEIFGDDACLQFGGGTLGHPWGNAPGAVANRVASEACVQARNEGRDLSREGGDVIREACKWSPEL.

Substrate is bound by residues N104 and T154. K156 (proton acceptor) is an active-site residue. K158 is a substrate binding site. The Mg(2+) site is built by K182, D184, and E185. K182 bears the N6-carboxylysine mark. Catalysis depends on H275, which acts as the Proton acceptor. Residues R276, H308, and S360 each contribute to the substrate site.

The protein belongs to the RuBisCO large chain family. Type I subfamily. In terms of assembly, heterohexadecamer of 8 large chains and 8 small chains. It depends on Mg(2+) as a cofactor.

Its subcellular location is the plastid. It is found in the chloroplast. It carries out the reaction 2 (2R)-3-phosphoglycerate + 2 H(+) = D-ribulose 1,5-bisphosphate + CO2 + H2O. The enzyme catalyses D-ribulose 1,5-bisphosphate + O2 = 2-phosphoglycolate + (2R)-3-phosphoglycerate + 2 H(+). RuBisCO catalyzes two reactions: the carboxylation of D-ribulose 1,5-bisphosphate, the primary event in carbon dioxide fixation, as well as the oxidative fragmentation of the pentose substrate in the photorespiration process. Both reactions occur simultaneously and in competition at the same active site. The polypeptide is Ribulose bisphosphate carboxylase large chain (Euglena viridis (Cercaria viridis)).